A 148-amino-acid chain; its full sequence is Transcriptional repressor NrdR (148 aa).

The segment at 1-22 is disordered; the sequence is MKCPYCSAPDSKVVNSRPSDDG. The segment at 3-34 is a zinc-finger region; it reads CPYCSAPDSKVVNSRPSDDGASIRRRRECLNC. The ATP-cone domain occupies 49 to 136; sequence LMVVKRSGPR…VYRDFDSLER (88 aa).

This sequence belongs to the NrdR family. It depends on Zn(2+) as a cofactor.

Functionally, negatively regulates transcription of bacterial ribonucleotide reductase nrd genes and operons by binding to NrdR-boxes. The sequence is that of Transcriptional repressor NrdR from Deinococcus deserti (strain DSM 17065 / CIP 109153 / LMG 22923 / VCD115).